Consider the following 368-residue polypeptide: Quinolinate synthase (368 aa).

Iminosuccinate is bound by residues H46 and S63. Residue C110 coordinates [4Fe-4S] cluster. Residues 141–143 (YVN) and S162 contribute to the iminosuccinate site. C230 is a binding site for [4Fe-4S] cluster. Iminosuccinate contacts are provided by residues 256–258 (HPE) and T273. C320 provides a ligand contact to [4Fe-4S] cluster.

The protein belongs to the quinolinate synthase family. Type 3 subfamily. [4Fe-4S] cluster serves as cofactor.

The protein resides in the cytoplasm. The catalysed reaction is iminosuccinate + dihydroxyacetone phosphate = quinolinate + phosphate + 2 H2O + H(+). Its pathway is cofactor biosynthesis; NAD(+) biosynthesis; quinolinate from iminoaspartate: step 1/1. Functionally, catalyzes the condensation of iminoaspartate with dihydroxyacetone phosphate to form quinolinate. This chain is Quinolinate synthase, found in Bacillus cytotoxicus (strain DSM 22905 / CIP 110041 / 391-98 / NVH 391-98).